The chain runs to 256 residues: Thiazole synthase (256 aa).

Catalysis depends on Lys-95, which acts as the Schiff-base intermediate with DXP. 1-deoxy-D-xylulose 5-phosphate-binding positions include Gly-156, 182 to 183, and 204 to 205; these read AG and NT.

It belongs to the ThiG family. Homotetramer. Forms heterodimers with either ThiH or ThiS.

The protein localises to the cytoplasm. The enzyme catalyses [ThiS sulfur-carrier protein]-C-terminal-Gly-aminoethanethioate + 2-iminoacetate + 1-deoxy-D-xylulose 5-phosphate = [ThiS sulfur-carrier protein]-C-terminal Gly-Gly + 2-[(2R,5Z)-2-carboxy-4-methylthiazol-5(2H)-ylidene]ethyl phosphate + 2 H2O + H(+). Its pathway is cofactor biosynthesis; thiamine diphosphate biosynthesis. In terms of biological role, catalyzes the rearrangement of 1-deoxy-D-xylulose 5-phosphate (DXP) to produce the thiazole phosphate moiety of thiamine. Sulfur is provided by the thiocarboxylate moiety of the carrier protein ThiS. In vitro, sulfur can be provided by H(2)S. This is Thiazole synthase from Salmonella paratyphi A (strain ATCC 9150 / SARB42).